The sequence spans 361 residues: UDP-N-acetylglucosamine--N-acetylmuramyl-(pentapeptide) pyrophosphoryl-undecaprenol N-acetylglucosamine transferase (361 aa).

UDP-N-acetyl-alpha-D-glucosamine is bound by residues Ser199 and Gln290.

This sequence belongs to the glycosyltransferase 28 family. MurG subfamily.

The protein localises to the cell membrane. It catalyses the reaction Mur2Ac(oyl-L-Ala-gamma-D-Glu-L-Lys-D-Ala-D-Ala)-di-trans,octa-cis-undecaprenyl diphosphate + UDP-N-acetyl-alpha-D-glucosamine = beta-D-GlcNAc-(1-&gt;4)-Mur2Ac(oyl-L-Ala-gamma-D-Glu-L-Lys-D-Ala-D-Ala)-di-trans,octa-cis-undecaprenyl diphosphate + UDP + H(+). Its pathway is cell wall biogenesis; peptidoglycan biosynthesis. In terms of biological role, cell wall formation. Catalyzes the transfer of a GlcNAc subunit on undecaprenyl-pyrophosphoryl-MurNAc-pentapeptide (lipid intermediate I) to form undecaprenyl-pyrophosphoryl-MurNAc-(pentapeptide)GlcNAc (lipid intermediate II). The chain is UDP-N-acetylglucosamine--N-acetylmuramyl-(pentapeptide) pyrophosphoryl-undecaprenol N-acetylglucosamine transferase from Streptococcus mutans serotype c (strain ATCC 700610 / UA159).